The chain runs to 156 residues: UPF0523 protein C (156 aa).

It belongs to the UPF0523 family.

The protein is UPF0523 protein C of Dictyostelium discoideum (Social amoeba).